Consider the following 662-residue polypeptide: MKSEPTSLDFTSSNLRRMNRDHSSNNTNRTVLNLPKEILIIIFSFLDPRSLLSAQCTCKYWKKLLSDDLSWRTAFFHHFAGDQSQIFSPLGNGTWRQEYLLRSTITRAYEKGKGQTVQYDCRVGQLTNLYYDFSSGRLYSGNWLTGTISVSDPTTGKVERSLLHASTDGSFTHGLSTMTLGKQIFGFGFMDGRVGVILMSRQAETPRKFRYCLDSHADSVTCIDALTGDLPPTGEIGMVTGSDDGSVHCWDVKTGVSLQSFQFRSSQILSLCFRPKYKMLLVDTFNYELNSYQLYLIPGYARSRKNEQPILLSSRKCVLTDEEEPPCLMTADCCAGVAFLSRGAPKNCICRVSFKEFLEKNDNVGVQTSSIPLNGKPTSISLDTNDRVLSKSTPGRGARLLAVGDENGLVYVVNTRTEDPNKAILRTITAYSNFPITDIYLNEVAMVVGSASGYCGVYDTVTGNFLKKIASARNAARREPINCILLDSNPLSLKGVITMSKHVKSWSYTIPKPFVNKRSKVLPLRPSVTHDNLSKSSDYSKNEVEREIMLGLDQIAQERREKMEARQKFEQHFGEGLVGLSEEEIIAYVTMLSQEEEAKRMVQLSMDVDKIEEDFKENDEQATSSLNALSSNHEPPQEQANVAELNEQEQIELAMRLSLMEM.

Positions 1 to 16 (MKSEPTSLDFTSSNLR) are enriched in polar residues. The tract at residues 1–27 (MKSEPTSLDFTSSNLRRMNRDHSSNNT) is disordered. Residues 28–74 (NRTVLNLPKEILIIIFSFLDPRSLLSAQCTCKYWKKLLSDDLSWRTA) enclose the F-box domain. WD repeat units follow at residues 215–260 (SHAD…SLQS), 263–302 (FRSS…GYAR), and 429–468 (TAYS…FLKK). The UIM 1 domain occupies 581–600 (SEEEIIAYVTMLSQEEEAKR). The tract at residues 617–645 (ENDEQATSSLNALSSNHEPPQEQANVAEL) is disordered. Over residues 621–640 (QATSSLNALSSNHEPPQEQA) the composition is skewed to polar residues. Residues 646–662 (NEQEQIELAMRLSLMEM) enclose the UIM 2 domain.

In terms of assembly, part of a SCF (SKP1-cullin-F-box) protein ligase complex. Interacts with skp1.

It localises to the cytoplasm. In terms of biological role, probably recognizes and binds to some phosphorylated proteins and promotes their ubiquitination and degradation. The protein is F-box/WD repeat-containing protein pof10 (pof10) of Schizosaccharomyces pombe (strain 972 / ATCC 24843) (Fission yeast).